We begin with the raw amino-acid sequence, 293 residues long: Ribosomal RNA small subunit methyltransferase A (293 aa).

Positions 33, 35, 60, 81, 111, and 130 each coordinate S-adenosyl-L-methionine.

This sequence belongs to the class I-like SAM-binding methyltransferase superfamily. rRNA adenine N(6)-methyltransferase family. RsmA subfamily.

It is found in the cytoplasm. It carries out the reaction adenosine(1518)/adenosine(1519) in 16S rRNA + 4 S-adenosyl-L-methionine = N(6)-dimethyladenosine(1518)/N(6)-dimethyladenosine(1519) in 16S rRNA + 4 S-adenosyl-L-homocysteine + 4 H(+). In terms of biological role, specifically dimethylates two adjacent adenosines (A1518 and A1519) in the loop of a conserved hairpin near the 3'-end of 16S rRNA in the 30S particle. May play a critical role in biogenesis of 30S subunits. The sequence is that of Ribosomal RNA small subunit methyltransferase A from Corynebacterium glutamicum (strain R).